The sequence spans 323 residues: ADP-ribose glycohydrolase MACROD1 (323 aa).

Residues Lys94, Lys101, and Lys127 each carry the N6-succinyllysine modification. Residue Lys136 forms a Glycyl lysine isopeptide (Lys-Gly) (interchain with G-Cter in SUMO2) linkage. Residues 139–320 enclose the Macro domain; it reads DPKYKKDKQL…IYRERLPHYF (182 aa). Residue 157–159 coordinates substrate; sequence GDI. The residue at position 161 (Lys161) is an N6-acetyllysine. Substrate-binding positions include 170-172, 177-182, 265-271, and Phe304; these read AAN, GGGGVD, and ISTGVFG.

It belongs to the MacroD-type family. MacroD1/2-like subfamily. Interacts with ESR1; Interacts in a manner that is estrogen independent but is enhanced by estrogen. Interacts (via macro domain) with AR.

Its subcellular location is the nucleus. It catalyses the reaction 3''-O-acetyl-ADP-D-ribose + H2O = ADP-D-ribose + acetate + H(+). The catalysed reaction is 2''-O-acetyl-ADP-D-ribose + H2O = ADP-D-ribose + acetate + H(+). It carries out the reaction 4-O-(ADP-D-ribosyl)-L-aspartyl-[protein] + H2O = L-aspartyl-[protein] + ADP-D-ribose + H(+). The enzyme catalyses 5-O-(ADP-D-ribosyl)-L-glutamyl-[protein] + H2O = L-glutamyl-[protein] + ADP-D-ribose + H(+). It catalyses the reaction alpha-NAD(+) + H2O = ADP-D-ribose + nicotinamide + H(+). Its activity is regulated as follows. Subject to competitive inhibition by the product ADP-ribose. Functionally, removes ADP-ribose from aspartate and glutamate residues in proteins bearing a single ADP-ribose moiety. Inactive towards proteins bearing poly-ADP-ribose. Deacetylates O-acetyl-ADP ribose, a signaling molecule generated by the deacetylation of acetylated lysine residues in histones and other proteins. Plays a role in estrogen signaling. Binds to androgen receptor (AR) and amplifies the transactivation function of AR in response to androgen. May play an important role in carcinogenesis and/or progression of hormone-dependent cancers by feed-forward mechanism that activates ESR1 transactivation. Could be an ESR1 coactivator, providing a positive feedback regulatory loop for ESR1 signal transduction. Could be involved in invasive growth by down-regulating CDH1 in endometrial cancer cells. Enhances ESR1-mediated transcription activity. The polypeptide is ADP-ribose glycohydrolase MACROD1 (Mus musculus (Mouse)).